A 272-amino-acid chain; its full sequence is GPN-loop GTPase 3 (272 aa).

12 to 17 is a GTP binding site; it reads GAGKST. The Gly-Pro-Asn (GPN)-loop; involved in dimer interface motif lies at 69–71; sequence GPN. GTP is bound at residue 172-175; it reads SKMD. The disordered stretch occupies residues 253-272; sequence QYGEDEEPKVPKDMDDGDFD.

It belongs to the GPN-loop GTPase family. As to quaternary structure, heterodimers with GPN1 or GPN2. Binds to RNA polymerase II (RNAPII).

Its function is as follows. Small GTPase required for proper nuclear import of RNA polymerase II and III (RNAPII and RNAPIII). May act at an RNAP assembly step prior to nuclear import. This is GPN-loop GTPase 3 from Cryptococcus neoformans var. neoformans serotype D (strain JEC21 / ATCC MYA-565) (Filobasidiella neoformans).